The sequence spans 263 residues: Glutamate/glutamine/aspartate/asparagine transport ATP-binding protein BztD (263 aa).

An ABC transporter domain is found at 23 to 257 (IQISQMNKWY…PQSERTKQFL (235 aa)). 55–62 (GPSGSGKS) contributes to the ATP binding site.

Belongs to the ABC transporter superfamily. In terms of assembly, bztB and BztC form a heterodimer which can form a membrane complex with a homodimer of BztD.

It is found in the cell membrane. Its function is as follows. Part of a binding-protein-dependent transport system for glutamate, glutamine, aspartate, asparagine. Probably responsible for energy coupling to the transport system. The sequence is that of Glutamate/glutamine/aspartate/asparagine transport ATP-binding protein BztD (bztD) from Rhodobacter capsulatus (strain ATCC BAA-309 / NBRC 16581 / SB1003).